Consider the following 376-residue polypeptide: Protein RecA (376 aa).

65-72 (GPESSGKT) contacts ATP. Residues 316 to 376 (EHDEIFTSVR…GDDLSDDDIY (61 aa)) are disordered. Positions 331–350 (GEKKDSDEDPGDNKKSKDSA) are enriched in basic and acidic residues. Over residues 366–376 (PGDDLSDDDIY) the composition is skewed to acidic residues.

This sequence belongs to the RecA family.

Its subcellular location is the cytoplasm. In terms of biological role, can catalyze the hydrolysis of ATP in the presence of single-stranded DNA, the ATP-dependent uptake of single-stranded DNA by duplex DNA, and the ATP-dependent hybridization of homologous single-stranded DNAs. It interacts with LexA causing its activation and leading to its autocatalytic cleavage. In Oenococcus oeni (strain ATCC BAA-331 / PSU-1), this protein is Protein RecA.